We begin with the raw amino-acid sequence, 92 residues long: Cell division protein FtsB (92 aa).

At 1–3 the chain is on the cytoplasmic side; sequence MKW. Residues 4-21 form a helical membrane-spanning segment; sequence VTVVLSFALVCCQYSLWF. Residues 22-92 are Periplasmic-facing; sequence GKGSIGRNSS…TFYRLIRHNR (71 aa). Residues 28–50 adopt a coiled-coil conformation; the sequence is RNSSLREQIAVQEEKNQTLALRN.

Belongs to the FtsB family. In terms of assembly, part of a complex composed of FtsB, FtsL and FtsQ.

The protein resides in the cell inner membrane. In terms of biological role, essential cell division protein. May link together the upstream cell division proteins, which are predominantly cytoplasmic, with the downstream cell division proteins, which are predominantly periplasmic. The protein is Cell division protein FtsB of Neisseria meningitidis serogroup C (strain 053442).